The sequence spans 308 residues: NADH-cytochrome b5 reductase 1 (308 aa).

Residues 29–49 (VASSPAFLVAAAAIVIAAAFY) form a helical membrane-spanning segment. The 104-residue stretch at 64-167 (SIWKEFPLQK…KGPKGNFKYT (104 aa)) folds into the FAD-binding FR-type domain. FAD contacts are provided by residues 147–162 (ASLK…GPKG) and 173–205 (HLGM…NITL).

This sequence belongs to the flavoprotein pyridine nucleotide cytochrome reductase family. In terms of assembly, monomer. Component of the 2-(3-amino-3-carboxypropyl)histidine synthase complex composed of DPH1, DPH2, DPH3 and a NADH-dependent reductase, predominantly MCR1.1. It depends on FAD as a cofactor.

The protein localises to the mitochondrion outer membrane. It carries out the reaction 2 Fe(III)-[cytochrome b5] + NADH = 2 Fe(II)-[cytochrome b5] + NAD(+) + H(+). The catalysed reaction is 2 Fe(3+)-[Dph3] + NADH = 2 Fe(2+)-[Dph3] + NAD(+) + H(+). The protein operates within protein modification; peptidyl-diphthamide biosynthesis. Functionally, NADH-dependent reductase for DPH3 and cytochrome b5. Required for the first step of diphthamide biosynthesis, a post-translational modification of histidine which occurs in elongation factor 2. DPH1 and DPH2 transfer a 3-amino-3-carboxypropyl (ACP) group from S-adenosyl-L-methionine (SAM) to a histidine residue, the reaction is assisted by a reduction system comprising DPH3 and a NADH-dependent reductase, predominantly MCR1.1. By reducing DPH3, also involved in the formation of the tRNA wobble base modification mcm5s 2U (5-methoxycarbonylmethyl-2-thiouridine), mediated by the elongator complex. The cytochrome b5/NADH cytochrome b5 reductase electron transfer system supports the catalytic activity of several sterol biosynthetic enzymes. In Laccaria bicolor (strain S238N-H82 / ATCC MYA-4686) (Bicoloured deceiver), this protein is NADH-cytochrome b5 reductase 1 (MCR1.1).